The following is a 2801-amino-acid chain: Neurobeachin-like protein 2 (2801 aa).

The disordered stretch occupies residues 1379-1529 (RHEEEYEEEE…TISNTSNPQA (151 aa)). Positions 1383–1393 (EYEEEEGETQD) are enriched in acidic residues. 4 stretches are compositionally biased toward polar residues: residues 1400 to 1413 (DLSQ…QLKN), 1424 to 1437 (GDQS…SNTV), 1470 to 1481 (KGPQTPVGSQPE), and 1500 to 1528 (SSSL…SNPQ). Residues 1986–2086 (SQKEKLVLSE…VRNKVYSRIL (101 aa)) enclose the BEACH-type PH domain. A BEACH domain is found at 2099–2391 (RSPQELLKAS…QLLKEPHPPR (293 aa)). 7 WD repeats span residues 2431 to 2468 (LVQA…SWLP), 2492 to 2535 (RFLS…MLGK), 2538 to 2575 (LVGR…VWQV), 2588 to 2626 (RPIQ…VHSV), 2633 to 2676 (WTLR…RYAL), 2684 to 2719 (TLLA…IRDL), and 2727 to 2762 (APLA…VGAG).

It belongs to the WD repeat neurobeachin family.

The protein resides in the endoplasmic reticulum. Involved in thrombopoiesis. Plays a role in the development or secretion of alpha-granules, that contain several growth factors important for platelet biogenesis. In Danio rerio (Zebrafish), this protein is Neurobeachin-like protein 2 (nbeal2).